Reading from the N-terminus, the 290-residue chain is L-cysteine S-thiosulfotransferase subunit SoxA (290 aa).

A signal peptide spans methionine 1–alanine 26. 2 residues coordinate Zn(2+): aspartate 78 and aspartate 81. One can recognise a Cytochrome c domain in the interval aspartate 78–serine 171. Heme c contacts are provided by cysteine 106, cysteine 109, histidine 110, and cysteine 143. Histidine 190 provides a ligand contact to Zn(2+). Heme c contacts are provided by cysteine 206, cysteine 209, and histidine 210. Position 247 (arginine 247) interacts with substrate. Residue cysteine 251 participates in heme c binding. Residue cysteine 251 is the Cysteine persulfide intermediate of the active site. Aspartate 266 contributes to the Zn(2+) binding site.

Belongs to the SoxA family. In terms of assembly, heterodimer of SoxA and SoxX. Heme c is required as a cofactor. It depends on Zn(2+) as a cofactor. Cysteine persulfide at Cys-251.

The protein localises to the periplasm. It carries out the reaction L-cysteinyl-[SoxY protein] + thiosulfate + 2 Fe(III)-[cytochrome c] = S-sulfosulfanyl-L-cysteinyl-[SoxY protein] + 2 Fe(II)-[cytochrome c] + 2 H(+). It catalyses the reaction S-sulfanyl-L-cysteinyl-[SoxY protein] + thiosulfate + 2 Fe(III)-[cytochrome c] = S-(2-sulfodisulfanyl)-L-cysteinyl-[SoxY protein] + 2 Fe(II)-[cytochrome c] + 2 H(+). C-type diheme cytochrome, which is part of the SoxAX cytochrome complex involved in sulfur oxidation. The SoxAX complex catalyzes the formation of a heterodisulfide bond between the conserved cysteine residue on a sulfur carrier SoxYZ complex subunit SoxY and thiosulfate or other inorganic sulfur substrates. This leads to the liberation of two electrons, which may be transferred from the SoxAX complex to another cytochrome c that then channels them into the respiratory electron transport chain. Some electrons may be used for reductive CO(2) fixation. The protein is L-cysteine S-thiosulfotransferase subunit SoxA of Paracoccus pantotrophus (Thiosphaera pantotropha).